The chain runs to 306 residues: Porphobilinogen deaminase (306 aa).

At C239 the chain carries S-(dipyrrolylmethanemethyl)cysteine.

This sequence belongs to the HMBS family. In terms of assembly, monomer. The cofactor is dipyrromethane.

The catalysed reaction is 4 porphobilinogen + H2O = hydroxymethylbilane + 4 NH4(+). Its pathway is porphyrin-containing compound metabolism; protoporphyrin-IX biosynthesis; coproporphyrinogen-III from 5-aminolevulinate: step 2/4. Tetrapolymerization of the monopyrrole PBG into the hydroxymethylbilane pre-uroporphyrinogen in several discrete steps. The sequence is that of Porphobilinogen deaminase from Helicobacter pylori (strain P12).